Here is a 386-residue protein sequence, read N- to C-terminus: S-adenosylmethionine synthase (386 aa).

Glutamate 8 lines the Mg(2+) pocket. Residue histidine 14 participates in ATP binding. Glutamate 42 lines the K(+) pocket. Residues glutamate 55 and glutamine 98 each coordinate L-methionine. ATP contacts are provided by residues 166–168 (DGK), 234–237 (SGRF), aspartate 245, 251–252 (RK), alanine 268, lysine 272, and lysine 276. L-methionine is bound at residue aspartate 245. Lysine 276 provides a ligand contact to L-methionine.

This sequence belongs to the AdoMet synthase family. Homotetramer. The cofactor is Mn(2+). Mg(2+) is required as a cofactor. Requires Co(2+) as cofactor. K(+) serves as cofactor.

Its subcellular location is the cytoplasm. The catalysed reaction is L-methionine + ATP + H2O = S-adenosyl-L-methionine + phosphate + diphosphate. It participates in amino-acid biosynthesis; S-adenosyl-L-methionine biosynthesis; S-adenosyl-L-methionine from L-methionine: step 1/1. Functionally, catalyzes the formation of S-adenosylmethionine from methionine and ATP. The reaction comprises two steps that are both catalyzed by the same enzyme: formation of S-adenosylmethionine (AdoMet) and triphosphate, and subsequent hydrolysis of the triphosphate. This Ostreococcus tauri protein is S-adenosylmethionine synthase (METK).